Consider the following 384-residue polypeptide: 8-amino-7-oxononanoate synthase (384 aa).

Arginine 21 provides a ligand contact to substrate. Glycine 108–phenylalanine 109 serves as a coordination point for pyridoxal 5'-phosphate. A substrate-binding site is contributed by histidine 133. Positions 179, 207, and 233 each coordinate pyridoxal 5'-phosphate. An N6-(pyridoxal phosphate)lysine modification is found at lysine 236. A substrate-binding site is contributed by threonine 352.

Belongs to the class-II pyridoxal-phosphate-dependent aminotransferase family. BioF subfamily. As to quaternary structure, homodimer. Pyridoxal 5'-phosphate is required as a cofactor.

The catalysed reaction is 6-carboxyhexanoyl-[ACP] + L-alanine + H(+) = (8S)-8-amino-7-oxononanoate + holo-[ACP] + CO2. It functions in the pathway cofactor biosynthesis; biotin biosynthesis. Its function is as follows. Catalyzes the decarboxylative condensation of pimeloyl-[acyl-carrier protein] and L-alanine to produce 8-amino-7-oxononanoate (AON), [acyl-carrier protein], and carbon dioxide. This chain is 8-amino-7-oxononanoate synthase, found in Escherichia coli (strain SE11).